Reading from the N-terminus, the 452-residue chain is GTPase Der (452 aa).

EngA-type G domains follow at residues Pro-4–Gln-169 and Ile-177–Arg-352. GTP contacts are provided by residues Gly-10–Ser-17, Asp-57–Leu-61, Asn-120–Glu-123, Gly-183–Ser-190, Asp-230–Ile-234, and Asn-295–Asp-298. The KH-like domain occupies Arg-353 to Val-439.

Belongs to the TRAFAC class TrmE-Era-EngA-EngB-Septin-like GTPase superfamily. EngA (Der) GTPase family. As to quaternary structure, associates with the 50S ribosomal subunit.

GTPase that plays an essential role in the late steps of ribosome biogenesis. The protein is GTPase Der of Synechocystis sp. (strain ATCC 27184 / PCC 6803 / Kazusa).